The chain runs to 155 residues: Putative pre-16S rRNA nuclease (155 aa).

The disordered stretch occupies residues 136–155 (DAERATSRPPGHPVEPRIGP).

Belongs to the YqgF nuclease family.

It localises to the cytoplasm. Functionally, could be a nuclease involved in processing of the 5'-end of pre-16S rRNA. This chain is Putative pre-16S rRNA nuclease, found in Leifsonia xyli subsp. xyli (strain CTCB07).